Consider the following 49-residue polypeptide: Large ribosomal subunit protein bL33 (49 aa).

This sequence belongs to the bacterial ribosomal protein bL33 family.

This is Large ribosomal subunit protein bL33 from Syntrophus aciditrophicus (strain SB).